Consider the following 423-residue polypeptide: D-tagatose-1,6-bisphosphate aldolase subunit GatZ (423 aa).

The protein belongs to the GatZ/KbaZ family. GatZ subfamily. In terms of assembly, forms a complex with GatY.

Its pathway is carbohydrate metabolism; D-tagatose 6-phosphate degradation; D-glyceraldehyde 3-phosphate and glycerone phosphate from D-tagatose 6-phosphate: step 2/2. Component of the tagatose-1,6-bisphosphate aldolase GatYZ that is required for full activity and stability of the Y subunit. Could have a chaperone-like function for the proper and stable folding of GatY. When expressed alone, GatZ does not show any aldolase activity. Is involved in the catabolism of galactitol. This chain is D-tagatose-1,6-bisphosphate aldolase subunit GatZ, found in Salmonella paratyphi B (strain ATCC BAA-1250 / SPB7).